Consider the following 427-residue polypeptide: 5-hydroxybenzimidazole synthase BzaB (427 aa).

Belongs to the ThiC family. 5-hydroxybenzimidazole synthase subfamily. It depends on [4Fe-4S] cluster as a cofactor.

It carries out the reaction 5-amino-1-(5-phospho-beta-D-ribosyl)imidazole + AH2 + S-adenosyl-L-methionine = 5-hydroxybenzimidazole + 5'-deoxyadenosine + formate + L-methionine + A + NH4(+) + phosphate + 2 H(+). Its pathway is cofactor biosynthesis; adenosylcobalamin biosynthesis. Together with BzaA, catalyzes the conversion of aminoimidazole ribotide (AIR) to 5-hydroxybenzimidazole (5-HBI) in a radical S-adenosyl-L-methionine (SAM)-dependent reaction. Is thus involved in the anaerobic biosynthesis of dimethylbenzimidazole (DMB), the lower axial ligand of vitamin B12 (cobalamin). Requires BzaA for catalytic activity, as BzaB alone displays no activity. In Eubacterium limosum, this protein is 5-hydroxybenzimidazole synthase BzaB.